Here is a 122-residue protein sequence, read N- to C-terminus: Large ribosomal subunit protein uL14 (122 aa).

The protein belongs to the universal ribosomal protein uL14 family. As to quaternary structure, part of the 50S ribosomal subunit. Forms a cluster with proteins L3 and L19. In the 70S ribosome, L14 and L19 interact and together make contacts with the 16S rRNA in bridges B5 and B8.

Functionally, binds to 23S rRNA. Forms part of two intersubunit bridges in the 70S ribosome. The sequence is that of Large ribosomal subunit protein uL14 from Parvibaculum lavamentivorans (strain DS-1 / DSM 13023 / NCIMB 13966).